A 452-amino-acid polypeptide reads, in one-letter code: Phosphoglucosamine mutase (452 aa).

Ser-108 serves as the catalytic Phosphoserine intermediate. Positions 108, 247, 249, and 251 each coordinate Mg(2+). Ser-108 carries the post-translational modification Phosphoserine.

Belongs to the phosphohexose mutase family. Requires Mg(2+) as cofactor. Post-translationally, activated by phosphorylation.

The enzyme catalyses alpha-D-glucosamine 1-phosphate = D-glucosamine 6-phosphate. Its function is as follows. Catalyzes the conversion of glucosamine-6-phosphate to glucosamine-1-phosphate. This chain is Phosphoglucosamine mutase, found in Burkholderia mallei (strain NCTC 10247).